The following is a 458-amino-acid chain: GDP-fucose protein O-fucosyltransferase 3 (458 aa).

Residues 1–11 (MRRISVKKLCS) are Cytoplasmic-facing. A helical; Signal-anchor for type II membrane protein transmembrane segment spans residues 12–32 (FCLCACAFAFLVMTFQVIELL). The Lumenal portion of the chain corresponds to 33-458 (GQFEQTEHRQ…TQFWREVFTD (426 aa)). N-linked (GlcNAc...) asparagine glycans are attached at residues N92, N150, and N300. A disulfide bond links C371 and C374. N445 carries an N-linked (GlcNAc...) asparagine glycan.

It belongs to the glycosyltransferase 10 family.

It localises to the endoplasmic reticulum membrane. It carries out the reaction L-threonyl-[protein] + GDP-beta-L-fucose = 3-O-(alpha-L-fucosyl)-L-threonyl-[protein] + GDP + H(+). The enzyme catalyses L-seryl-[protein] + GDP-beta-L-fucose = 3-O-(alpha-L-fucosyl)-L-seryl-[protein] + GDP + H(+). The protein operates within protein modification; protein glycosylation. Protein O-fucosyltransferase that specifically catalyzes O-fucosylation of serine or threonine residues in EMI domains of target proteins. Attaches fucose through an O-glycosidic linkage. O-fucosylation of EMI domain-containing proteins may be required for facilitating protein folding and secretion. The polypeptide is GDP-fucose protein O-fucosyltransferase 3 (fut10) (Danio rerio (Zebrafish)).